Reading from the N-terminus, the 367-residue chain is Glutamate 5-kinase (367 aa).

Lysine 17 is an ATP binding site. Residues serine 57, aspartate 144, and asparagine 156 each coordinate substrate. ATP-binding positions include 176 to 177 and 217 to 223; these read SD and TGGMTSK. The PUA domain maps to 279–357; that stretch reads AGALTLDEGA…SELPGELRRP (79 aa).

The protein belongs to the glutamate 5-kinase family.

It localises to the cytoplasm. It carries out the reaction L-glutamate + ATP = L-glutamyl 5-phosphate + ADP. It participates in amino-acid biosynthesis; L-proline biosynthesis; L-glutamate 5-semialdehyde from L-glutamate: step 1/2. Catalyzes the transfer of a phosphate group to glutamate to form L-glutamate 5-phosphate. The protein is Glutamate 5-kinase of Mycolicibacterium paratuberculosis (strain ATCC BAA-968 / K-10) (Mycobacterium paratuberculosis).